The primary structure comprises 364 residues: Very-long-chain (3R)-3-hydroxyacyl-CoA dehydratase 3 (364 aa).

The Cytoplasmic portion of the chain corresponds to M1–Y151. The CS domain maps to V7–T96. A Phosphothreonine modification is found at T9. A coiled-coil region spans residues L113 to E138. Residues S116 and S137 each carry the phosphoserine modification. Residues L152–V172 traverse the membrane as a helical segment. The Lumenal segment spans residues R173–D191. Residues M192–T212 form a helical membrane-spanning segment. Residues T213–S214 lie on the Cytoplasmic side of the membrane. The helical transmembrane segment at P215–G235 threads the bilayer. Over T236 to A244 the chain is Lumenal. The chain crosses the membrane as a helical span at residues V245–M265. Residues L266–T282 are Cytoplasmic-facing. A helical transmembrane segment spans residues L283 to I303. Active-site residues include Y288 and E295. Residues P304–V324 lie on the Lumenal side of the membrane. The helical transmembrane segment at R325–F345 threads the bilayer. Residues R346–H364 are Cytoplasmic-facing.

The protein belongs to the very long-chain fatty acids dehydratase HACD family. In terms of assembly, may interact with enzymes of the ELO family (including ELOVL1); with those enzymes that mediate condensation, the first of the four steps of the reaction cycle responsible for fatty acids elongation, may be part of a larger fatty acids elongase complex. Interacts with RAC1.

It localises to the endoplasmic reticulum membrane. It catalyses the reaction a very-long-chain (3R)-3-hydroxyacyl-CoA = a very-long-chain (2E)-enoyl-CoA + H2O. The enzyme catalyses (3R)-hydroxyhexadecanoyl-CoA = (2E)-hexadecenoyl-CoA + H2O. Its pathway is lipid metabolism; fatty acid biosynthesis. Its function is as follows. Catalyzes the third of the four reactions of the long-chain fatty acids elongation cycle. This endoplasmic reticulum-bound enzymatic process, allows the addition of two carbons to the chain of long- and very long-chain fatty acids/VLCFAs per cycle. This enzyme catalyzes the dehydration of the 3-hydroxyacyl-CoA intermediate into trans-2,3-enoyl-CoA, within each cycle of fatty acid elongation. Thereby, it participates in the production of VLCFAs of different chain lengths that are involved in multiple biological processes as precursors of membrane lipids and lipid mediators. Involved in Rac1-signaling pathways leading to the modulation of gene expression. This chain is Very-long-chain (3R)-3-hydroxyacyl-CoA dehydratase 3, found in Pongo abelii (Sumatran orangutan).